A 45-amino-acid polypeptide reads, in one-letter code: Major cold shock protein (45 aa).

One can recognise a CSD domain in the interval 1–45 (EKGFGFISTENGQDVFAHFSAIQTNGFKTLEEGQKVEFDVEEGQR).

As to quaternary structure, homodimer.

The protein resides in the cytoplasm. The sequence is that of Major cold shock protein (cspA) from Streptococcus dysgalactiae.